The primary structure comprises 856 residues: DNA mismatch repair protein MutS (856 aa).

Position 609–616 (609–616) interacts with ATP; it reads GPNMSGKS.

Belongs to the DNA mismatch repair MutS family.

This protein is involved in the repair of mismatches in DNA. It is possible that it carries out the mismatch recognition step. This protein has a weak ATPase activity. The chain is DNA mismatch repair protein MutS from Finegoldia magna (strain ATCC 29328 / DSM 20472 / WAL 2508) (Peptostreptococcus magnus).